Here is a 30-residue protein sequence, read N- to C-terminus: Alpha-defensin PhD-4 (30 aa).

Cystine bridges form between Cys2–Cys30, Cys4–Cys19, and Cys9–Cys29.

The protein resides in the secreted. In low salt conditions, has antibacterial activity against the Gram-negative bacterium E.coli ML35p (MIC=2.4 uM), the Gram-positive bacteria L.monocytogenes EGD (MIC=2.2 uM) and methicillin-resistant S.aureus ATCC 33591 (MIC=3.5 uM), and the fungus C.albicans 820 (MIC=3.9 uM). At high physiological salt concentrations the antimicrobial activity decreases significantly: E.coli ML35p (MIC=7.1 uM), L.monocytogenes EGD (MIC=1.8 uM), S.aureus ATCC 33591 (MIC=&gt;50 uM), and C.albicans 820 (MIC=&gt;50 uM). The polypeptide is Alpha-defensin PhD-4 (Papio hamadryas (Hamadryas baboon)).